A 692-amino-acid polypeptide reads, in one-letter code: uncharacterized protein (692 aa).

The transit peptide at 1-39 (MLRLPSSMPIVSFPANPNLLINPQPSWPSRRGNSAVVVS) directs the protein to the chloroplast. A Protein kinase domain is found at 189 to 523 (EISPEPVAAA…RLESLLSESL (335 aa)). ATP-binding positions include 195–203 (VAAASLGQV) and Lys218. Asp343 acts as the Proton acceptor in catalysis.

Belongs to the protein kinase superfamily. ADCK protein kinase family.

The protein localises to the plastid. The protein resides in the chloroplast. Its subcellular location is the plastoglobule. This is an uncharacterized protein from Arabidopsis thaliana (Mouse-ear cress).